We begin with the raw amino-acid sequence, 717 residues long: MFKDKKMLKYIVIYSIIAFGILLTFNMVKDEMLYEKVDYSTFMQMLDKKEVKSVNFSGNQIEITPSDSSNLKGKILYTTNPAVAGITQPELIKDLTVAGVEFNVTKPENYQLLGLLMSWVFPLILIFFVGRMMFSKMNNKMGGGVMSFGKNNAKLYAENETGITFKDVAGQDEAKESLVEIVDFLHDTRKYVEIGAKLPKGALLVGPPGTGKTLLAKAVAGEAKVPFFSMSGSDFVEMFVGMGAARVRDLFKQAEEKAPCIVFIDEIDAIGKSRDGAIQGNDEREQTLNQLLTEMDGFDSSKGVVILAATNRPEVLDKALLRPGRFDRRIIVDRPDLIGREEILKVHSRDVKLSDDVSLEEIAKSTPGAVGADLANIVNEAALRAVKHGRKFVIQEDLDEAVEVIIAGQEKRDRILSPKEKKIVAYHEVGHALVAALLNNTDPVHKITIVPRTMGALGYTMQLPEEEKYLVSKEEMIDQISVMLGGRAAEEVVFNSITTGASNDIERATQSARNMITIYGMSERFDMMALEAMSNRYLDGRPVRNCSETTAAIADEEVLQVIKKAHEKSIKILIENRELLDEITGVLLDKETIMGDEFMEIVYGKYPEKREADEKAKKEIQSLREQALAKRKEKEEAIKKAREEALRLEEEQRKQDELKAMIEAQEEAAKLARANNEANNDALDSSKENEEVKSNVNDGATEEKKDDSSTNNKVDGE.

The Cytoplasmic portion of the chain corresponds to 1 to 7; sequence MFKDKKM. The chain crosses the membrane as a helical span at residues 8 to 28; the sequence is LKYIVIYSIIAFGILLTFNMV. Topologically, residues 29–109 are extracellular; it reads KDEMLYEKVD…VEFNVTKPEN (81 aa). The helical transmembrane segment at 110–130 threads the bilayer; it reads YQLLGLLMSWVFPLILIFFVG. Over 131–717 the chain is Cytoplasmic; it reads RMMFSKMNNK…SSTNNKVDGE (587 aa). 206 to 213 lines the ATP pocket; it reads GPPGTGKT. Residue histidine 427 coordinates Zn(2+). Glutamate 428 is an active-site residue. Positions 431 and 504 each coordinate Zn(2+). Residues 670-717 are disordered; sequence KLARANNEANNDALDSSKENEEVKSNVNDGATEEKKDDSSTNNKVDGE. Composition is skewed to basic and acidic residues over residues 684-693 and 701-717; these read DSSKENEEVK and TEEK…VDGE.

The protein in the central section; belongs to the AAA ATPase family. This sequence in the C-terminal section; belongs to the peptidase M41 family. In terms of assembly, homohexamer. Zn(2+) serves as cofactor.

The protein resides in the cell membrane. Functionally, acts as a processive, ATP-dependent zinc metallopeptidase for both cytoplasmic and membrane proteins. Plays a role in the quality control of integral membrane proteins. This chain is ATP-dependent zinc metalloprotease FtsH, found in Clostridium perfringens (strain ATCC 13124 / DSM 756 / JCM 1290 / NCIMB 6125 / NCTC 8237 / Type A).